An 89-amino-acid polypeptide reads, in one-letter code: UPF0175 protein ssl1255 (89 aa).

This sequence belongs to the UPF0175 family.

This chain is UPF0175 protein ssl1255, found in Synechocystis sp. (strain ATCC 27184 / PCC 6803 / Kazusa).